We begin with the raw amino-acid sequence, 662 residues long: ATP-dependent zinc metalloprotease FtsH (662 aa).

Over residues 1–15 (MSENPVKRPGKDGSR) the composition is skewed to basic and acidic residues. The segment at 1–35 (MSENPVKRPGKDGSRNKFKPVQEEGGTPGWFRSKG) is disordered. The Cytoplasmic segment spans residues 1-39 (MSENPVKRPGKDGSRNKFKPVQEEGGTPGWFRSKGESPQ). The chain crosses the membrane as a helical span at residues 40-60 (GKFPGFLLFLMAGLLMLFVFL). Residues 61–154 (RFFSGTDAPE…LKVEKGSSDL (94 aa)) lie on the Periplasmic side of the membrane. A helical transmembrane segment spans residues 155 to 175 (NTFLALFAPWIIFAALYFFLF). Topologically, residues 176–662 (RRMSGQNGAQ…QGALPNPVTA (487 aa)) are cytoplasmic. Residue 250–257 (GPPGTGKT) coordinates ATP. H472 contributes to the Zn(2+) binding site. Residue E473 is part of the active site. The Zn(2+) site is built by H476 and D548.

The protein in the central section; belongs to the AAA ATPase family. This sequence in the C-terminal section; belongs to the peptidase M41 family. In terms of assembly, homohexamer. Zn(2+) serves as cofactor.

It localises to the cell inner membrane. Functionally, acts as a processive, ATP-dependent zinc metallopeptidase for both cytoplasmic and membrane proteins. Plays a role in the quality control of integral membrane proteins. The chain is ATP-dependent zinc metalloprotease FtsH from Pelodictyon phaeoclathratiforme (strain DSM 5477 / BU-1).